The primary structure comprises 52 residues: Insulin (52 aa).

Intrachain disulfides connect Cys7–Cys38, Cys19–Cys51, and Cys37–Cys42.

Belongs to the insulin family. As to quaternary structure, heterodimer of a B chain and an A chain linked by two disulfide bonds.

Its subcellular location is the secreted. Insulin decreases blood glucose concentration. It increases cell permeability to monosaccharides, amino acids and fatty acids. It accelerates glycolysis, the pentose phosphate cycle, and glycogen synthesis in liver. This Atractosteus spatula (Alligator gar) protein is Insulin (ins).